Consider the following 533-residue polypeptide: Nitrogen fixation protein AnfA (533 aa).

The a domain stretch occupies residues 33–193; it reads ILYKISQIIT…PLVELYLIEN (161 aa). The GAF domain occupies 46–186; it reads DLADALSIVL…MIATMIAPLV (141 aa). A Sigma-54 factor interaction domain is found at 219–448; the sequence is IIGNSKPMQE…LENVMERAVI (230 aa). Residues 247-254 and 310-319 contribute to the ATP site; these read GESGVGKE and ADGGTIFLDE. The H-T-H motif DNA-binding region spans 501–520; that stretch reads IGEAAKELGLARRMLGVRME.

Its function is as follows. AnfA is essential for nitrogen fixation under Mo- and V-deficient conditions. It is required for the regulation of nitrogenase 3 transcription. Interacts with sigma-54. This chain is Nitrogen fixation protein AnfA (anfA), found in Azotobacter vinelandii.